The sequence spans 155 residues: Small ribosomal subunit protein uS7c (155 aa).

This sequence belongs to the universal ribosomal protein uS7 family. As to quaternary structure, part of the 30S ribosomal subunit.

The protein resides in the plastid. The protein localises to the chloroplast. Functionally, one of the primary rRNA binding proteins, it binds directly to 16S rRNA where it nucleates assembly of the head domain of the 30S subunit. The protein is Small ribosomal subunit protein uS7c (rps7) of Gunnera chilensis (Chilean rhubarb).